Reading from the N-terminus, the 68-residue chain is Prokaryotic ubiquitin-like protein Pup (68 aa).

The disordered stretch occupies residues 1-37 (MAQERIFGTGSRREDEPDTPAPVDPPVSGAAQAQRDM). The ARC ATPase binding stretch occupies residues 24–62 (DPPVSGAAQAQRDMQGTDDLLAEIDGVLETNAEAFVKGF). The residue at position 68 (Q68) is a Deamidated glutamine. Q68 participates in a covalent cross-link: Isoglutamyl lysine isopeptide (Gln-Lys) (interchain with K-? in acceptor proteins).

This sequence belongs to the prokaryotic ubiquitin-like protein family. In terms of assembly, strongly interacts with the proteasome-associated ATPase ARC through a hydrophobic interface; the interacting region of Pup lies in its C-terminal half. There is one Pup binding site per ARC hexamer ring. In terms of processing, is modified by deamidation of its C-terminal glutamine to glutamate by the deamidase Dop, a prerequisite to the subsequent pupylation process.

It participates in protein degradation; proteasomal Pup-dependent pathway. Its function is as follows. Protein modifier that is covalently attached to lysine residues of substrate proteins, thereby targeting them for proteasomal degradation. The tagging system is termed pupylation. This is Prokaryotic ubiquitin-like protein Pup from Kocuria rhizophila (strain ATCC 9341 / DSM 348 / NBRC 103217 / DC2201).